Consider the following 150-residue polypeptide: Large ribosomal subunit protein uL15 (150 aa).

Belongs to the universal ribosomal protein uL15 family. Part of the 50S ribosomal subunit.

Binds to the 23S rRNA. The sequence is that of Large ribosomal subunit protein uL15 from Rickettsia typhi (strain ATCC VR-144 / Wilmington).